A 29-amino-acid chain; its full sequence is uncharacterized protein (29 aa).

It is found in the plastid. It localises to the chloroplast. This is an uncharacterized protein from Trieres chinensis (Marine centric diatom).